Consider the following 313-residue polypeptide: Ribosomal protein L11 methyltransferase (313 aa).

S-adenosyl-L-methionine is bound by residues Thr164, Gly185, Asp207, and Asn249.

Belongs to the methyltransferase superfamily. PrmA family.

The protein localises to the cytoplasm. The catalysed reaction is L-lysyl-[protein] + 3 S-adenosyl-L-methionine = N(6),N(6),N(6)-trimethyl-L-lysyl-[protein] + 3 S-adenosyl-L-homocysteine + 3 H(+). Its function is as follows. Methylates ribosomal protein L11. The protein is Ribosomal protein L11 methyltransferase of Clostridium botulinum (strain Alaska E43 / Type E3).